A 713-amino-acid polypeptide reads, in one-letter code: G-protein coupled receptor-associated protein LMBRD2 (713 aa).

Over 1–3 (MSG) the chain is Extracellular. A helical membrane pass occupies residues 4–21 (VALGIEIVSVFFLALFLL). Residues 22 to 32 (HRYGDFKKQHK) lie on the Cytoplasmic side of the membrane. Residues 33-53 (LVIVGTLLAWYLCFLIVFIIP) traverse the membrane as a helical segment. Topologically, residues 54–122 (LDVSTTIYNR…SKPWSYIPRG (69 aa)) are extracellular. Asparagine 76 and asparagine 89 each carry an N-linked (GlcNAc...) asparagine glycan. A helical transmembrane segment spans residues 123–143 (IMPIFWRVVYWTSQFLTWILM). At 144–167 (PFMQSYARSGGFSITGKIKTALIE) the chain is on the cytoplasmic side. Residues 168–188 (NAIYYGTYLLIFGALLIYVAV) traverse the membrane as a helical segment. Residues 189 to 203 (NPNLHLEWYQLQTIG) lie on the Extracellular side of the membrane. Residues 204–224 (IAAANTWGLFLLVLLMGYGLV) traverse the membrane as a helical segment. Residues 225 to 404 (EIPRSQWNGA…ECLLRPWCSR (180 aa)) are Cytoplasmic-facing. A coiled-coil region spans residues 246–314 (KAAKLMTEKA…DDYEDFEEKN (69 aa)). Residues 405-425 (ILAVILALFSTVVVWSECTFF) form a helical membrane-spanning segment. The Extracellular portion of the chain corresponds to 426–449 (SAKPVLSLFAVFIQQAEQTHNYIY). A helical transmembrane segment spans residues 450 to 470 (VEVVCFLSIFFLSICVYSTVF). The Cytoplasmic segment spans residues 471–490 (RIRVFNYYYLASHHQTDAYS). A helical transmembrane segment spans residues 491–511 (LLFSGMLFCRLTPPLCLNFLG). At 512 to 538 (LTHMDVSISHQNIEPTAYTSIMGSLRV) the chain is on the extracellular side. A helical transmembrane segment spans residues 539–559 (LPLIADVFYIYYPMLVLILCI). Over 560–713 (ATYFSLGTRC…QSNSRIFDDV (154 aa)) the chain is Cytoplasmic. The stretch at 587-620 (DLTDEGKELIKREKRKRQRLEDGETRRREWKERY) forms a coiled coil. The disordered stretch occupies residues 600–713 (KRKRQRLEDG…QSNSRIFDDV (114 aa)). A compositionally biased stretch (basic and acidic residues) spans 605-629 (RLEDGETRRREWKERYPTNREDTSR). Positions 643–657 (TEMTTNRSSKYTRAS) are enriched in polar residues. A compositionally biased stretch (basic and acidic residues) spans 658–667 (NRTERDRIEL). Residues 701 to 713 (SMSQSNSRIFDDV) show a composition bias toward polar residues.

It belongs to the LIMR family.

Its subcellular location is the cell membrane. Functionally, may associate with G-protein coupled receptors and regulate downstream signaling pathways. The protein is G-protein coupled receptor-associated protein LMBRD2 (lmbrd2) of Xenopus laevis (African clawed frog).